The sequence spans 427 residues: MKLRTNASGLSGTLKIPGDKSISHRSIMFGSLAKGITKIYGILRGEDVLSTMQAFRDLGVEIKDKDDFVEIHGRGFDGLKSPKKALDMGNSGTSIRLISGVLAGQDFTVEMFGDDSLSKRPMDRVTVPLRQMGVQILGRTERDLPPLTMKGSKRLKPIRYELPVASAQVKSALIFAALQASGESVIIEKEKTRNHTEDMIKQFGGHLDVDGKEIRISGGQEFTAQNVIVPGDISSAAFWLAAGLIVSNSKLTLKNVGINETRTGILEVIEAMGGKVELSDRDDLAKAATLTVESSNLKGTEIGGDIIPRLIDELPIIALLATQANGRTVIYDAQELKVKETDRIQVVADALNAMGAKITPTDDGMIIEGKTNLHGAKVNTFGDHRIGMMTAIAALLVKEGEVELERAEAINTSYPTFFSDLERITNG.

3-phosphoshikimate contacts are provided by K20, S21, and R25. K20 is a phosphoenolpyruvate binding site. Residues G92 and R120 each coordinate phosphoenolpyruvate. Residues S166, Q168, D312, and K339 each contribute to the 3-phosphoshikimate site. Q168 contributes to the phosphoenolpyruvate binding site. The active-site Proton acceptor is D312. R343 and R385 together coordinate phosphoenolpyruvate.

It belongs to the EPSP synthase family. In terms of assembly, monomer.

It localises to the cytoplasm. The enzyme catalyses 3-phosphoshikimate + phosphoenolpyruvate = 5-O-(1-carboxyvinyl)-3-phosphoshikimate + phosphate. Its pathway is metabolic intermediate biosynthesis; chorismate biosynthesis; chorismate from D-erythrose 4-phosphate and phosphoenolpyruvate: step 6/7. Catalyzes the transfer of the enolpyruvyl moiety of phosphoenolpyruvate (PEP) to the 5-hydroxyl of shikimate-3-phosphate (S3P) to produce enolpyruvyl shikimate-3-phosphate and inorganic phosphate. The protein is 3-phosphoshikimate 1-carboxyvinyltransferase of Streptococcus mutans serotype c (strain ATCC 700610 / UA159).